Consider the following 315-residue polypeptide: Replication factor C small subunit (315 aa).

43-50 (GSPGVGKT) serves as a coordination point for ATP.

It belongs to the activator 1 small subunits family. RfcS subfamily. In terms of assembly, heteromultimer composed of small subunits (RfcS) and large subunits (RfcL).

Its function is as follows. Part of the RFC clamp loader complex which loads the PCNA sliding clamp onto DNA. The chain is Replication factor C small subunit from Methanococcus maripaludis (strain DSM 14266 / JCM 13030 / NBRC 101832 / S2 / LL).